The primary structure comprises 91 residues: MARVTVQDAVEKIGNRFDLVLVAARRARQLQTGGKDPLVPEENDKYTVIALREIEDGLINNQILDVRDRQEQQEQEAAEIQAVTAIAEGRR.

It belongs to the RNA polymerase subunit omega family. As to quaternary structure, the RNAP catalytic core consists of 2 alpha, 1 beta, 1 beta' and 1 omega subunit. When a sigma factor is associated with the core the holoenzyme is formed, which can initiate transcription.

The catalysed reaction is RNA(n) + a ribonucleoside 5'-triphosphate = RNA(n+1) + diphosphate. Its function is as follows. Promotes RNA polymerase assembly. Latches the N- and C-terminal regions of the beta' subunit thereby facilitating its interaction with the beta and alpha subunits. In Pectobacterium atrosepticum (strain SCRI 1043 / ATCC BAA-672) (Erwinia carotovora subsp. atroseptica), this protein is DNA-directed RNA polymerase subunit omega.